A 172-amino-acid chain; its full sequence is MKTKALFLDRDGVINIDKKYVYKIEDFEFCDGIFELCRYFLARNYLLFIATNQSGIARGYYKESDFFKLCDYMLKEFAKQDIKIDKIYHCPHLEGCECRKPKAGMLLKAKDEFDLDMKNSIFIGDNLSDMQAGLNADIGTLILVNEEKKEGDFFRQFKNLKEILNFFKEKDI.

Residue Asp9 is the Nucleophile of the active site. Mg(2+) contacts are provided by Asp9 and Asp11. Substrate-binding positions include 9–11 (DRD), 17–20 (DKKY), and 51–54 (TNQS). The Proton donor role is filled by Asp11. Zn(2+) is bound by residues Cys90, His92, Cys96, and Cys98. 99 to 100 (RK) is a binding site for substrate. Asp125 provides a ligand contact to Mg(2+).

The protein belongs to the GmhB family. In terms of assembly, monomer. The cofactor is Mg(2+). Zn(2+) is required as a cofactor.

The protein localises to the cytoplasm. The catalysed reaction is D-glycero-alpha-D-manno-heptose 1,7-bisphosphate + H2O = D-glycero-alpha-D-manno-heptose 1-phosphate + phosphate. It participates in nucleotide-sugar biosynthesis; GDP-D-glycero-alpha-D-manno-heptose biosynthesis; GDP-D-glycero-alpha-D-manno-heptose from D-glycero-alpha-D-manno-heptose 7-phosphate: step 2/3. Its pathway is capsule biogenesis; capsule polysaccharide biosynthesis. It functions in the pathway nucleotide-sugar biosynthesis; ADP-L-glycero-beta-D-manno-heptose biosynthesis; ADP-L-glycero-beta-D-manno-heptose from D-glycero-beta-D-manno-heptose 7-phosphate: step 2/4. The protein operates within bacterial outer membrane biogenesis; LOS core biosynthesis. In terms of biological role, converts the D-glycero-alpha-D-manno-heptose 1,7-bisphosphate intermediate into D-glycero-alpha-D-manno-heptose 1-phosphate by removing the phosphate group at the C-7 position. This Campylobacter jejuni subsp. jejuni serotype O:2 (strain ATCC 700819 / NCTC 11168) protein is D-glycero-alpha-D-manno-heptose-1,7-bisphosphate 7-phosphatase (gmhB).